The primary structure comprises 67 residues: Potassium channel toxin alpha-KTx 6.16 (67 aa).

The N-terminal stretch at 1 to 24 (MNLKLALVLLLTVINVGMLPGATS) is a signal peptide. Intrachain disulfides connect Cys-34–Cys-55, Cys-40–Cys-60, Cys-44–Cys-62, and Cys-50–Cys-65.

The protein belongs to the short scorpion toxin superfamily. Potassium channel inhibitor family. Alpha-KTx 06 subfamily. As to expression, expressed by the venom gland.

The protein localises to the secreted. Functionally, inhibits voltage-gated potassium channels. The chain is Potassium channel toxin alpha-KTx 6.16 from Opisthacanthus cayaporum (South American scorpion).